The primary structure comprises 492 residues: MKYNLNQLFKNYKINGLSTNSQTVKENEVFFALKGQNVDGNDFINDALNNGAVLVITENKKNTVIDKVIYVEDVYEALYEAIEIFYPKKPKNLISVTGTNGKSSVVSYIAQTYFLLRKKAAFIGTIGLEIFGCNNIINDVPSLTTLDYLNFRKIAHNLAEDSIEYLAFEASSHGLEQGRLGKTKVNIVSFTSFSQDHLDYHHTKENYLLAKLKLFTDHLLPSGIAILNSDIEEIEFVKDYLRNNNVKFITVGKKGDVQITKITCSLTGQNIDFIFNNIIYNLHTLIIGSFQASNLLIAALTLYYTGFKFDEIIEALSKVKPVKGRMERIDGTNIFVDYSHTPDALEKALIELQNIKPHGGKLSVIFGCGGDRDKTKRGLMGKIAAKFADNVIITDDNPRFEDPKLIRTEIIRGIGTATYTEIESREEAIKYGINNLKQDDILLIAGKGHENYQIVGDKKLPFDDSEVVRKYLFSMSCTRNQQKHLVSSRTVV.

Ser-21 is a binding site for UDP-N-acetyl-alpha-D-muramoyl-L-alanyl-D-glutamate. An ATP-binding site is contributed by 98 to 104; the sequence is GTNGKSS. UDP-N-acetyl-alpha-D-muramoyl-L-alanyl-D-glutamate is bound by residues 144-145, Ser-171, Gln-177, and Arg-179; that span reads TT. An N6-carboxylysine modification is found at Lys-211. Residues Arg-372, 396–399, Gly-446, and Glu-450 each bind meso-2,6-diaminopimelate; that span reads DNPR. Positions 396–399 match the Meso-diaminopimelate recognition motif motif; it reads DNPR.

This sequence belongs to the MurCDEF family. MurE subfamily. Mg(2+) is required as a cofactor. Post-translationally, carboxylation is probably crucial for Mg(2+) binding and, consequently, for the gamma-phosphate positioning of ATP.

The protein localises to the cytoplasm. The catalysed reaction is UDP-N-acetyl-alpha-D-muramoyl-L-alanyl-D-glutamate + meso-2,6-diaminopimelate + ATP = UDP-N-acetyl-alpha-D-muramoyl-L-alanyl-gamma-D-glutamyl-meso-2,6-diaminopimelate + ADP + phosphate + H(+). It functions in the pathway cell wall biogenesis; peptidoglycan biosynthesis. Its function is as follows. Catalyzes the addition of meso-diaminopimelic acid to the nucleotide precursor UDP-N-acetylmuramoyl-L-alanyl-D-glutamate (UMAG) in the biosynthesis of bacterial cell-wall peptidoglycan. The chain is UDP-N-acetylmuramoyl-L-alanyl-D-glutamate--2,6-diaminopimelate ligase from Rickettsia typhi (strain ATCC VR-144 / Wilmington).